A 458-amino-acid chain; its full sequence is Dynein regulatory complex protein 10 (458 aa).

Coiled coils occupy residues 96–137 (GQTL…HKVN), 209–255 (IQDI…KNHL), and 285–379 (QVRL…IRAE). Residues 397 to 426 (MVRAATLIQAVWKGYLVRSILRSKKKKRGK) enclose the IQ domain. The disordered stretch occupies residues 419-458 (SKKKKRGKGKGKDKGKGKEKPKEEKAKEKKPKAKGKGKKK). Positions 428 to 445 (KGKDKGKGKEKPKEEKAK) are enriched in basic and acidic residues. A compositionally biased stretch (basic residues) spans 446–458 (EKKPKAKGKGKKK).

This sequence belongs to the DRC10 family. Component of the nexin-dynein regulatory complex (N-DRC). Interacts with CFAP52.

Its subcellular location is the cytoplasm. The protein resides in the cytoskeleton. It is found in the flagellum axoneme. In terms of biological role, component of the nexin-dynein regulatory complex (N-DRC), a key regulator of ciliary/flagellar motility which maintains the alignment and integrity of the distal axoneme and regulates microtubule sliding in motile axonemes. This chain is Dynein regulatory complex protein 10 (Iqcd), found in Mus musculus (Mouse).